The primary structure comprises 344 residues: Serpentine receptor class H-72 (344 aa).

Helical transmembrane passes span 30–50 (GLAF…FFTG), 66–86 (LSLV…SFFI), 110–132 (TVVQ…TLLF), 155–175 (WLAG…FNLA), 221–241 (SIYM…LVIV), 259–279 (YGLI…SVLI), and 292–312 (LVSI…LLVH).

Belongs to the nematode receptor-like protein srh family.

Its subcellular location is the membrane. The protein is Serpentine receptor class H-72 (srh-72) of Caenorhabditis elegans.